A 280-amino-acid polypeptide reads, in one-letter code: Adenosylcobinamide-GDP ribazoletransferase (280 aa).

The next 7 helical transmembrane spans lie at 4–24, 34–54, 58–78, 108–128, 136–156, 197–217, and 254–274; these read YLLA…GITM, IFFY…VAYA, VFPG…ITGF, TLGT…YGSI, IAAF…IAEV, LIGF…IGLI, and ITAL…YLGG.

It belongs to the CobS family. The cofactor is Mg(2+).

It localises to the cell membrane. It carries out the reaction alpha-ribazole + adenosylcob(III)inamide-GDP = adenosylcob(III)alamin + GMP + H(+). It catalyses the reaction alpha-ribazole 5'-phosphate + adenosylcob(III)inamide-GDP = adenosylcob(III)alamin 5'-phosphate + GMP + H(+). Its pathway is cofactor biosynthesis; adenosylcobalamin biosynthesis; adenosylcobalamin from cob(II)yrinate a,c-diamide: step 7/7. In terms of biological role, joins adenosylcobinamide-GDP and alpha-ribazole to generate adenosylcobalamin (Ado-cobalamin). Also synthesizes adenosylcobalamin 5'-phosphate from adenosylcobinamide-GDP and alpha-ribazole 5'-phosphate. The protein is Adenosylcobinamide-GDP ribazoletransferase of Methanosarcina mazei (strain ATCC BAA-159 / DSM 3647 / Goe1 / Go1 / JCM 11833 / OCM 88) (Methanosarcina frisia).